The primary structure comprises 443 residues: Thymidine phosphorylase (443 aa).

The protein belongs to the thymidine/pyrimidine-nucleoside phosphorylase family. As to quaternary structure, homodimer.

It catalyses the reaction thymidine + phosphate = 2-deoxy-alpha-D-ribose 1-phosphate + thymine. It functions in the pathway pyrimidine metabolism; dTMP biosynthesis via salvage pathway; dTMP from thymine: step 1/2. Its function is as follows. The enzymes which catalyze the reversible phosphorolysis of pyrimidine nucleosides are involved in the degradation of these compounds and in their utilization as carbon and energy sources, or in the rescue of pyrimidine bases for nucleotide synthesis. The sequence is that of Thymidine phosphorylase from Aeromonas salmonicida (strain A449).